The sequence spans 502 residues: ATP synthase subunit alpha (502 aa).

169–176 (GDRQTGKT) is a binding site for ATP.

It belongs to the ATPase alpha/beta chains family. As to quaternary structure, F-type ATPases have 2 components, CF(1) - the catalytic core - and CF(0) - the membrane proton channel. CF(1) has five subunits: alpha(3), beta(3), gamma(1), delta(1), epsilon(1). CF(0) has three main subunits: a(1), b(2) and c(9-12). The alpha and beta chains form an alternating ring which encloses part of the gamma chain. CF(1) is attached to CF(0) by a central stalk formed by the gamma and epsilon chains, while a peripheral stalk is formed by the delta and b chains.

It is found in the cell inner membrane. The catalysed reaction is ATP + H2O + 4 H(+)(in) = ADP + phosphate + 5 H(+)(out). Functionally, produces ATP from ADP in the presence of a proton gradient across the membrane. The alpha chain is a regulatory subunit. The chain is ATP synthase subunit alpha from Nitratidesulfovibrio vulgaris (strain DSM 19637 / Miyazaki F) (Desulfovibrio vulgaris).